The following is a 396-amino-acid chain: Elongation factor Tu (396 aa).

In terms of domain architecture, tr-type G spans 10-206 (KPHVNIGTIG…AVDESVPDPI (197 aa)). The G1 stretch occupies residues 19-26 (GHVDHGKT). 19-26 (GHVDHGKT) provides a ligand contact to GTP. Threonine 26 contacts Mg(2+). The interval 62 to 66 (GITIN) is G2. The interval 83–86 (DAPG) is G3. GTP-binding positions include 83–87 (DAPGH) and 138–141 (NKSD). The G4 stretch occupies residues 138–141 (NKSD). A G5 region spans residues 176–178 (SGL).

Belongs to the TRAFAC class translation factor GTPase superfamily. Classic translation factor GTPase family. EF-Tu/EF-1A subfamily. As to quaternary structure, monomer.

Its subcellular location is the cytoplasm. The catalysed reaction is GTP + H2O = GDP + phosphate + H(+). In terms of biological role, GTP hydrolase that promotes the GTP-dependent binding of aminoacyl-tRNA to the A-site of ribosomes during protein biosynthesis. The chain is Elongation factor Tu from Renibacterium salmoninarum (strain ATCC 33209 / DSM 20767 / JCM 11484 / NBRC 15589 / NCIMB 2235).